A 364-amino-acid chain; its full sequence is DNA polymerase IV (364 aa).

The region spanning Ile-14–Gly-198 is the UmuC domain. Residues Asp-18 and Asp-116 each coordinate Mg(2+). Glu-117 is a catalytic residue.

The protein belongs to the DNA polymerase type-Y family. Monomer. It depends on Mg(2+) as a cofactor.

It is found in the cytoplasm. It catalyses the reaction DNA(n) + a 2'-deoxyribonucleoside 5'-triphosphate = DNA(n+1) + diphosphate. In terms of biological role, poorly processive, error-prone DNA polymerase involved in untargeted mutagenesis. Copies undamaged DNA at stalled replication forks, which arise in vivo from mismatched or misaligned primer ends. These misaligned primers can be extended by PolIV. Exhibits no 3'-5' exonuclease (proofreading) activity. May be involved in translesional synthesis, in conjunction with the beta clamp from PolIII. The polypeptide is DNA polymerase IV (Streptococcus pyogenes serotype M6 (strain ATCC BAA-946 / MGAS10394)).